Reading from the N-terminus, the 89-residue chain is uncharacterized protein (89 aa).

The next 2 membrane-spanning stretches (helical) occupy residues 1-21 (MFLALTSIAIPAAIVIPISLI) and 28-48 (GISLTFSMTIGFVGLILTIAA).

It localises to the cell membrane. This is an uncharacterized protein from Methanocaldococcus jannaschii (strain ATCC 43067 / DSM 2661 / JAL-1 / JCM 10045 / NBRC 100440) (Methanococcus jannaschii).